Reading from the N-terminus, the 580-residue chain is High affinity choline transporter 1 (580 aa).

The Extracellular portion of the chain corresponds to 1 to 6 (MAFHVE). A helical transmembrane segment spans residues 7–27 (GLIAIIVFYLLILLVGIWAAW). At 28–48 (RTKNSGSAEERSEAIIVGGRD) the chain is on the cytoplasmic side. A helical membrane pass occupies residues 49–69 (IGLLVGGFTMTATWVGGGYIN). The Extracellular segment spans residues 70–81 (GTAEAVYVPGYG). Residues 82 to 102 (LAWAQAPIGYSLSLILGGLFF) form a helical membrane-spanning segment. The Cytoplasmic portion of the chain corresponds to 103–125 (AKPMRSKGYVTMLDPFQQIYGKR). Residues 126 to 146 (MGGLLFIPALMGEMFWAAAIF) form a helical membrane-spanning segment. The Extracellular portion of the chain corresponds to 147 to 164 (SALGATISVIIDVDMHIS). A helical transmembrane segment spans residues 165-185 (VIISALIATLYTLVGGLYSVA). Residues 186 to 191 (YTDVVQ) are Cytoplasmic-facing. Residues 192 to 212 (LFCIFVGLWISVPFALSHPAV) traverse the membrane as a helical segment. The Extracellular segment spans residues 213 to 237 (ADIGFTAVHAKYQKPWLGTVDSSEV). Residues 238-258 (YSWLDSFLLLMLGGIPWQAYF) traverse the membrane as a helical segment. Topologically, residues 259-274 (QRVLSSSSATYAQVLS) are cytoplasmic. A helical membrane pass occupies residues 275–295 (FLAAFGCLVMAIPAILIGAIG). At 296 to 317 (ASTDWNQTAYGLPDPKTTEEAD) the chain is on the extracellular side. A glycan (N-linked (GlcNAc...) asparagine) is linked at Asn301. A helical membrane pass occupies residues 318–338 (MILPIVLQYLCPVYISFFGLG). Topologically, residues 339–376 (AVSAAVMSSADSSILSASSMFARNIYQLSFRQNASDKE) are cytoplasmic. The chain crosses the membrane as a helical span at residues 377 to 397 (IVWVMRITVFVFGASATAMAL). The Extracellular portion of the chain corresponds to 398–406 (LTKTVYGLW). Residues 407 to 427 (YLSSDLVYIVIFPQLLCVLFV) form a helical membrane-spanning segment. Residues 428-435 (KGTNTYGA) are Cytoplasmic-facing. A helical transmembrane segment spans residues 436-456 (VAGYVSGLFLRITGGEPYLYL). Residues 457-481 (QPLIFYPGYYPDDNGIYNQKFPFKT) are Extracellular-facing. Residues 482–502 (LAMVTSFLTNICISYLAKYLF) form a helical membrane-spanning segment. The segment at 502–580 (FESGTLPPKL…EGSGTEDNLQ (79 aa)) is mediates interaction with SEC14L1. Residues 503–580 (ESGTLPPKLD…EGSGTEDNLQ (78 aa)) are Cytoplasmic-facing. The Dileucine-like motif motif lies at 527-532 (DKTILV).

This sequence belongs to the sodium:solute symporter (SSF) (TC 2.A.21) family. In terms of assembly, homooligomerizes at cell surface. Interacts with SEC14L1; may regulate SLC5A7. In terms of processing, phosphorylated. As to expression, expressed in putamen, spinal cord and medulla. Expressed in cholinergic neurons.

Its subcellular location is the presynaptic cell membrane. The protein resides in the cell projection. The protein localises to the axon. It localises to the early endosome membrane. It is found in the cytoplasmic vesicle. Its subcellular location is the secretory vesicle. The protein resides in the synaptic vesicle membrane. It carries out the reaction choline(out) + n Na(+)(out) = choline(in) + n Na(+)(in). Choline uptake activity is regulated by SLC5A7/CHT1 internalization (inactive form) from the cell surface and recycling of internalized SLC5A7/CHT1 into the cell surface (active form). Activated by extracellular chloride ion. Specifically inhibited by nanomolar concentrations of hemicholinium 3. Functionally, high-affinity Na(+)-coupled choline transmembrane symporter. Functions as an electrogenic, voltage-dependent transporter with variable charge/choline stoichiometry. Choline uptake and choline-induced current is also Cl(-)-dependent where Cl(-) is likely a regulatory ion rather than cotransported ion. Plays a critical role in acetylcholine (ACh) synthesis by taking up the substrate choline from the synaptic cleft into the presynaptic nerve terminals after neurotransmitter release. SLC5A7/CHT1-mediated choline high-affinity transport in cholinergic neurons is the rate-limiting step for production of ACh, thereby facilitating communication by subsequent action potentials. Localized predominantly in presynaptic terminal intracellular organelles, and translocated to the plasma membrane in active form in response to neuronal activity. The sequence is that of High affinity choline transporter 1 from Homo sapiens (Human).